The chain runs to 287 residues: Bifunctional protein FolD (287 aa).

NADP(+)-binding positions include 167–169 (GRS) and T192.

Belongs to the tetrahydrofolate dehydrogenase/cyclohydrolase family. Homodimer.

It carries out the reaction (6R)-5,10-methylene-5,6,7,8-tetrahydrofolate + NADP(+) = (6R)-5,10-methenyltetrahydrofolate + NADPH. The enzyme catalyses (6R)-5,10-methenyltetrahydrofolate + H2O = (6R)-10-formyltetrahydrofolate + H(+). It functions in the pathway one-carbon metabolism; tetrahydrofolate interconversion. In terms of biological role, catalyzes the oxidation of 5,10-methylenetetrahydrofolate to 5,10-methenyltetrahydrofolate and then the hydrolysis of 5,10-methenyltetrahydrofolate to 10-formyltetrahydrofolate. The protein is Bifunctional protein FolD of Sorangium cellulosum (strain So ce56) (Polyangium cellulosum (strain So ce56)).